Consider the following 453-residue polypeptide: Pup--protein ligase (453 aa).

Glu-9 contributes to the Mg(2+) binding site. Arg-53 lines the ATP pocket. Residue Tyr-55 participates in Mg(2+) binding. Asp-57 functions as the Proton acceptor in the catalytic mechanism. Mg(2+) is bound at residue Glu-63. Residues Thr-66 and Trp-420 each coordinate ATP.

This sequence belongs to the Pup ligase/Pup deamidase family. Pup-conjugating enzyme subfamily.

The catalysed reaction is ATP + [prokaryotic ubiquitin-like protein]-L-glutamate + [protein]-L-lysine = ADP + phosphate + N(6)-([prokaryotic ubiquitin-like protein]-gamma-L-glutamyl)-[protein]-L-lysine.. It participates in protein degradation; proteasomal Pup-dependent pathway. Its pathway is protein modification; protein pupylation. Functionally, catalyzes the covalent attachment of the prokaryotic ubiquitin-like protein modifier Pup to the proteasomal substrate proteins, thereby targeting them for proteasomal degradation. This tagging system is termed pupylation. The ligation reaction involves the side-chain carboxylate of the C-terminal glutamate of Pup and the side-chain amino group of a substrate lysine. The chain is Pup--protein ligase from Streptomyces avermitilis (strain ATCC 31267 / DSM 46492 / JCM 5070 / NBRC 14893 / NCIMB 12804 / NRRL 8165 / MA-4680).